The chain runs to 61 residues: MSESETTDEPDSETASSERTGQLESCQRCGREQGLVGKYDIWLCRQCFREISRGMGFRKYS.

Acidic residues predominate over residues 1–12 (MSESETTDEPDS). The segment at 1-25 (MSESETTDEPDSETASSERTGQLES) is disordered. Cys26, Cys29, Cys44, and Cys47 together coordinate Zn(2+).

The protein belongs to the universal ribosomal protein uS14 family. Zinc-binding uS14 subfamily. In terms of assembly, part of the 30S ribosomal subunit. Requires Zn(2+) as cofactor.

Binds 16S rRNA, required for the assembly of 30S particles. The polypeptide is Small ribosomal subunit protein uS14 (Haloarcula marismortui (strain ATCC 43049 / DSM 3752 / JCM 8966 / VKM B-1809) (Halobacterium marismortui)).